A 120-amino-acid chain; its full sequence is Large ribosomal subunit protein bL17 (120 aa).

Belongs to the bacterial ribosomal protein bL17 family. In terms of assembly, part of the 50S ribosomal subunit. Contacts protein L32.

The protein is Large ribosomal subunit protein bL17 of Mycoplasmopsis synoviae (strain 53) (Mycoplasma synoviae).